The sequence spans 284 residues: 2-dehydro-3-deoxyphosphooctonate aldolase (284 aa).

It belongs to the KdsA family.

It localises to the cytoplasm. The enzyme catalyses D-arabinose 5-phosphate + phosphoenolpyruvate + H2O = 3-deoxy-alpha-D-manno-2-octulosonate-8-phosphate + phosphate. The protein operates within carbohydrate biosynthesis; 3-deoxy-D-manno-octulosonate biosynthesis; 3-deoxy-D-manno-octulosonate from D-ribulose 5-phosphate: step 2/3. It participates in bacterial outer membrane biogenesis; lipopolysaccharide biosynthesis. This Burkholderia mallei (strain NCTC 10247) protein is 2-dehydro-3-deoxyphosphooctonate aldolase.